The sequence spans 590 residues: Pescadillo homolog (590 aa).

The segment at 297–318 (AKADAGEEEEVEEEEEVEDDGL) is disordered. Over residues 302–318 (GEEEEVEEEEEVEDDGL) the composition is skewed to acidic residues. The BRCT domain occupies 337–446 (TAGQLFSNFT…KLLPVSEYAP (110 aa)). The disordered stretch occupies residues 452–590 (AHLSPWGDAG…RKLNEKKEKR (139 aa)). The segment covering 471-499 (DASDDDEDDEDIEVAPEDYDKDDEEEEAE) has biased composition (acidic residues). Residues 489–589 (YDKDDEEEEA…RRKLNEKKEK (101 aa)) are a coiled coil. Composition is skewed to basic and acidic residues over residues 500–517 (AEAK…KGTK), 532–547 (DKMT…DKKL), and 567–577 (NDKKSDREAEL).

The protein belongs to the pescadillo family. In terms of assembly, component of the NOP7 complex, composed of ERB1, NOP7 and YTM1. The complex is held together by ERB1, which interacts with NOP7 via its N-terminal domain and with YTM1 via a high-affinity interaction between the seven-bladed beta-propeller domains of the 2 proteins. The NOP7 complex associates with the 66S pre-ribosome.

It localises to the nucleus. Its subcellular location is the nucleolus. The protein resides in the nucleoplasm. In terms of biological role, component of the NOP7 complex, which is required for maturation of the 25S and 5.8S ribosomal RNAs and formation of the 60S ribosome. The polypeptide is Pescadillo homolog (Yarrowia lipolytica (strain CLIB 122 / E 150) (Yeast)).